Here is a 310-residue protein sequence, read N- to C-terminus: Olfactory receptor 5P53 (310 aa).

The Extracellular segment spans residues 1–25 (MEAENHTTVAELIILGLTEDPKLCI). Asn5 carries an N-linked (GlcNAc...) asparagine glycan. Residues 26-46 (VFFVIFLGVYIVTLVGNISII) form a helical membrane-spanning segment. The Cytoplasmic segment spans residues 47–54 (TLIRISSQ). The chain crosses the membrane as a helical span at residues 55-75 (LHTPMYLFLSHLAFVDILYST). Residues 76–99 (SVSVIMHMELLGHGLALPVAACAA) lie on the Extracellular side of the membrane. Cys97 and Cys189 are joined by a disulfide. A helical transmembrane segment spans residues 100–120 (QLCITVSFGSAECFLLAAMAY). Residues 121–133 (DRYVAICSPLLYS) are Cytoplasmic-facing. A helical membrane pass occupies residues 134–154 (TLMSPRVCFLLLGMSYVGGCM). Topologically, residues 155 to 196 (NGWTFTGCLLSLSFCGPNQIDHFFCDFSPLLKLSCSDVSIIG) are extracellular. The chain crosses the membrane as a helical span at residues 197-217 (IIPSISSGSIIVVTVFVIAVS). The Cytoplasmic segment spans residues 218–237 (YIYILITILNMRSTEGRHKA). A helical transmembrane segment spans residues 238–258 (FSTCTSHLTAVTLYYGTITFI). Over 259–271 (YVMPKSNYSTEQN) the chain is Extracellular. An N-linked (GlcNAc...) asparagine glycan is attached at Asn265. Residues 272–292 (KVLSVFYTVVIPMLNPLIYSL) traverse the membrane as a helical segment. Over 293–310 (RNRDVKEALRKATVRVYS) the chain is Cytoplasmic.

Belongs to the G-protein coupled receptor 1 family.

It is found in the cell membrane. Potential odorant receptor. The sequence is that of Olfactory receptor 5P53 from Mus musculus (Mouse).